The chain runs to 339 residues: Uroporphyrinogen decarboxylase (339 aa).

Residues 21–25 (RQAGR), aspartate 71, tyrosine 147, serine 202, and histidine 315 each bind substrate.

It belongs to the uroporphyrinogen decarboxylase family. Homodimer.

Its subcellular location is the cytoplasm. The catalysed reaction is uroporphyrinogen III + 4 H(+) = coproporphyrinogen III + 4 CO2. Its pathway is porphyrin-containing compound metabolism; protoporphyrin-IX biosynthesis; coproporphyrinogen-III from 5-aminolevulinate: step 4/4. Its function is as follows. Catalyzes the decarboxylation of four acetate groups of uroporphyrinogen-III to yield coproporphyrinogen-III. The polypeptide is Uroporphyrinogen decarboxylase (Helicobacter acinonychis (strain Sheeba)).